The following is an 803-amino-acid chain: Subtilisin-like protease SBT5.5 (803 aa).

Positions 1-22 (MKRIFGIFIFLSLLLFLVPLLA) are cleaved as a signal peptide. Positions 23 to 112 (SCTKEKQVYI…KSDPRKYKIH (90 aa)) are cleaved as a propeptide — activation peptide. One can recognise an Inhibitor I9 domain in the interval 30–108 (VYIVYFGEHK…VSVFKSDPRK (79 aa)). One can recognise a Peptidase S8 domain in the interval 140 to 656 (KYDVNDRFRV…SRHFRPTKAA (517 aa)). Asp-169 functions as the Charge relay system in the catalytic mechanism. Asn-202 carries an N-linked (GlcNAc...) asparagine glycan. The Charge relay system role is filled by His-244. Positions 409–504 (YAPLVYAPDV…VFSSTVDRIL (96 aa)) constitute a PA domain. Ser-589 acts as the Charge relay system in catalysis. N-linked (GlcNAc...) asparagine glycosylation occurs at Asn-725.

The protein belongs to the peptidase S8 family.

It localises to the secreted. The sequence is that of Subtilisin-like protease SBT5.5 from Arabidopsis thaliana (Mouse-ear cress).